The primary structure comprises 478 residues: Ankyrin repeat and BTB/POZ domain-containing protein 1 (478 aa).

2 ANK repeats span residues 1–31 and 35–64; these read MDTS…EVNV and WDST…RCEA. BTB domains lie at 115 to 182 and 272 to 346; these read SDVV…DIGV and PDIC…ELSP. Residues 451 to 477 adopt a coiled-coil conformation; it reads VQTYSAIEEAQQRLRALEDLLVSIGLD.

As to expression, ubiquitously expressed in all fetal tissues examined including heart, brain, liver, and kidney. Also expressed at lower levels in both adult heart and hypertrophic heart.

Its subcellular location is the cytoplasm. Functionally, may act as a mediator of the PTEN growth-suppressive signaling pathway. May play a role in developmental processes. The chain is Ankyrin repeat and BTB/POZ domain-containing protein 1 from Homo sapiens (Human).